A 458-amino-acid chain; its full sequence is ATP synthase subunit beta (458 aa).

Position 148–155 (148–155) interacts with ATP; the sequence is GGAGVGKT.

Belongs to the ATPase alpha/beta chains family. F-type ATPases have 2 components, CF(1) - the catalytic core - and CF(0) - the membrane proton channel. CF(1) has five subunits: alpha(3), beta(3), gamma(1), delta(1), epsilon(1). CF(0) has three main subunits: a(1), b(2) and c(9-12). The alpha and beta chains form an alternating ring which encloses part of the gamma chain. CF(1) is attached to CF(0) by a central stalk formed by the gamma and epsilon chains, while a peripheral stalk is formed by the delta and b chains.

It localises to the cell inner membrane. The catalysed reaction is ATP + H2O + 4 H(+)(in) = ADP + phosphate + 5 H(+)(out). In terms of biological role, produces ATP from ADP in the presence of a proton gradient across the membrane. The catalytic sites are hosted primarily by the beta subunits. The polypeptide is ATP synthase subunit beta (Pseudomonas putida (strain ATCC 700007 / DSM 6899 / JCM 31910 / BCRC 17059 / LMG 24140 / F1)).